The sequence spans 295 residues: 4-hydroxy-3-methylbut-2-enyl diphosphate reductase (295 aa).

Cys-12 is a binding site for [4Fe-4S] cluster. Positions 43 and 81 each coordinate (2E)-4-hydroxy-3-methylbut-2-enyl diphosphate. Residues His-43 and His-81 each coordinate dimethylallyl diphosphate. 2 residues coordinate isopentenyl diphosphate: His-43 and His-81. Cys-103 contributes to the [4Fe-4S] cluster binding site. His-131 contacts (2E)-4-hydroxy-3-methylbut-2-enyl diphosphate. His-131 serves as a coordination point for dimethylallyl diphosphate. His-131 provides a ligand contact to isopentenyl diphosphate. Glu-133 serves as the catalytic Proton donor. Thr-171 contacts (2E)-4-hydroxy-3-methylbut-2-enyl diphosphate. Position 199 (Cys-199) interacts with [4Fe-4S] cluster. Residues Ser-227, Asn-229, and Ser-272 each contribute to the (2E)-4-hydroxy-3-methylbut-2-enyl diphosphate site. Positions 227, 229, and 272 each coordinate dimethylallyl diphosphate. Residues Ser-227, Asn-229, and Ser-272 each coordinate isopentenyl diphosphate.

Belongs to the IspH family. The cofactor is [4Fe-4S] cluster.

It carries out the reaction isopentenyl diphosphate + 2 oxidized [2Fe-2S]-[ferredoxin] + H2O = (2E)-4-hydroxy-3-methylbut-2-enyl diphosphate + 2 reduced [2Fe-2S]-[ferredoxin] + 2 H(+). The catalysed reaction is dimethylallyl diphosphate + 2 oxidized [2Fe-2S]-[ferredoxin] + H2O = (2E)-4-hydroxy-3-methylbut-2-enyl diphosphate + 2 reduced [2Fe-2S]-[ferredoxin] + 2 H(+). It functions in the pathway isoprenoid biosynthesis; dimethylallyl diphosphate biosynthesis; dimethylallyl diphosphate from (2E)-4-hydroxy-3-methylbutenyl diphosphate: step 1/1. The protein operates within isoprenoid biosynthesis; isopentenyl diphosphate biosynthesis via DXP pathway; isopentenyl diphosphate from 1-deoxy-D-xylulose 5-phosphate: step 6/6. Catalyzes the conversion of 1-hydroxy-2-methyl-2-(E)-butenyl 4-diphosphate (HMBPP) into a mixture of isopentenyl diphosphate (IPP) and dimethylallyl diphosphate (DMAPP). Acts in the terminal step of the DOXP/MEP pathway for isoprenoid precursor biosynthesis. In Symbiobacterium thermophilum (strain DSM 24528 / JCM 14929 / IAM 14863 / T), this protein is 4-hydroxy-3-methylbut-2-enyl diphosphate reductase.